The sequence spans 275 residues: NH(3)-dependent NAD(+) synthetase (275 aa).

ATP is bound at residue 46-53; that stretch reads GISGGQDS. Asp-52 is a Mg(2+) binding site. Arg-140 is a binding site for deamido-NAD(+). Thr-160 is a binding site for ATP. Glu-165 lines the Mg(2+) pocket. Lys-173 and Asp-180 together coordinate deamido-NAD(+). ATP contacts are provided by Lys-189 and Thr-211. 260–261 provides a ligand contact to deamido-NAD(+); sequence HK.

The protein belongs to the NAD synthetase family. In terms of assembly, homodimer.

The catalysed reaction is deamido-NAD(+) + NH4(+) + ATP = AMP + diphosphate + NAD(+) + H(+). It functions in the pathway cofactor biosynthesis; NAD(+) biosynthesis; NAD(+) from deamido-NAD(+) (ammonia route): step 1/1. In terms of biological role, catalyzes the ATP-dependent amidation of deamido-NAD to form NAD. Uses ammonia as a nitrogen source. The sequence is that of NH(3)-dependent NAD(+) synthetase from Salmonella paratyphi A (strain ATCC 9150 / SARB42).